The primary structure comprises 313 residues: Beta-ketoacyl-[acyl-carrier-protein] synthase III (313 aa).

Active-site residues include C112 and H238. An ACP-binding region spans residues 239-243; sequence QANIR. N268 is a catalytic residue.

It belongs to the thiolase-like superfamily. FabH family. In terms of assembly, homodimer.

It localises to the cytoplasm. It carries out the reaction malonyl-[ACP] + acetyl-CoA + H(+) = 3-oxobutanoyl-[ACP] + CO2 + CoA. It participates in lipid metabolism; fatty acid biosynthesis. Its function is as follows. Catalyzes the condensation reaction of fatty acid synthesis by the addition to an acyl acceptor of two carbons from malonyl-ACP. Catalyzes the first condensation reaction which initiates fatty acid synthesis and may therefore play a role in governing the total rate of fatty acid production. Possesses both acetoacetyl-ACP synthase and acetyl transacylase activities. Its substrate specificity determines the biosynthesis of branched-chain and/or straight-chain of fatty acids. The protein is Beta-ketoacyl-[acyl-carrier-protein] synthase III of Staphylococcus aureus (strain bovine RF122 / ET3-1).